The chain runs to 230 residues: Enolase-phosphatase E1 (230 aa).

The protein belongs to the HAD-like hydrolase superfamily. MasA/MtnC family. As to quaternary structure, monomer. Requires Mg(2+) as cofactor.

It carries out the reaction 5-methylsulfanyl-2,3-dioxopentyl phosphate + H2O = 1,2-dihydroxy-5-(methylsulfanyl)pent-1-en-3-one + phosphate. It participates in amino-acid biosynthesis; L-methionine biosynthesis via salvage pathway; L-methionine from S-methyl-5-thio-alpha-D-ribose 1-phosphate: step 3/6. Its pathway is amino-acid biosynthesis; L-methionine biosynthesis via salvage pathway; L-methionine from S-methyl-5-thio-alpha-D-ribose 1-phosphate: step 4/6. Its function is as follows. Bifunctional enzyme that catalyzes the enolization of 2,3-diketo-5-methylthiopentyl-1-phosphate (DK-MTP-1-P) into the intermediate 2-hydroxy-3-keto-5-methylthiopentenyl-1-phosphate (HK-MTPenyl-1-P), which is then dephosphorylated to form the acireductone 1,2-dihydroxy-3-keto-5-methylthiopentene (DHK-MTPene). This Sulfurihydrogenibium sp. (strain YO3AOP1) protein is Enolase-phosphatase E1.